The sequence spans 459 residues: Argininosuccinate lyase (459 aa).

Belongs to the lyase 1 family. Argininosuccinate lyase subfamily.

Its subcellular location is the cytoplasm. It carries out the reaction 2-(N(omega)-L-arginino)succinate = fumarate + L-arginine. It participates in amino-acid biosynthesis; L-arginine biosynthesis; L-arginine from L-ornithine and carbamoyl phosphate: step 3/3. The sequence is that of Argininosuccinate lyase from Bacillus licheniformis (strain ATCC 14580 / DSM 13 / JCM 2505 / CCUG 7422 / NBRC 12200 / NCIMB 9375 / NCTC 10341 / NRRL NRS-1264 / Gibson 46).